Reading from the N-terminus, the 453-residue chain is Nuclear and cytoplasmic polyadenylated RNA-binding protein PUB1 (453 aa).

The interval 1 to 67 is disordered; the sequence is MSENNEEQHQ…PSVVPANAIT (67 aa). At S2 the chain carries N-acetylserine. 2 consecutive RRM domains span residues 75–152 and 162–240; these read RVLY…WAFQ and FNLF…WAAK. The interval 241-262 is disordered; that stretch reads RDNNNNNNYQQRRNYGNNNRGG. The segment covering 244–262 has biased composition (low complexity); it reads NNNNNYQQRRNYGNNNRGG. Position 260 is an omega-N-methylarginine (R260). The tract at residues 260-264 is RNA-binding RGG-box; sequence RGGFR. The RRM 3 domain maps to 341-413; sequence TTAYIGNIPH…RNLRTGWGKE (73 aa). Residues 419–453 form a disordered region; that stretch reads PQQQQQGGQPLIMNDQQQPVMSEQQQQQQQQQQQQ. The span at 434–453 shows a compositional bias: low complexity; sequence QQQPVMSEQQQQQQQQQQQQ.

As to quaternary structure, interacts with NAB2.

It localises to the cytoplasm. It is found in the nucleus. The protein resides in the P-body. The protein localises to the stress granule. May be associated with hnRNA within the nucleus and remains associated during nucleocytoplasmic mRNA transport, once the proteins are in the cytoplasm, disassembly of PUB1-RNA complexes may occur prior to PAB1 binding and formation of a translationally competent RNP complex. Binds to polyadenylated RNA; prefers to bind poly(rU); binds to T-rich single-stranded DNA. The polypeptide is Nuclear and cytoplasmic polyadenylated RNA-binding protein PUB1 (Saccharomyces cerevisiae (strain ATCC 204508 / S288c) (Baker's yeast)).